The chain runs to 131 residues: Insulin-like 3 (131 aa).

Residues 1 to 24 form the signal peptide; it reads MDPRLPAWALVLLGPALVFALGPA. 3 cysteine pairs are disulfide-bonded: C34–C117, C46–C130, and C116–C121. A propeptide spans 58–104 (c peptide like); it reads PVAAGDGELLQWLERRHLLYGLVANSEPAPGGPGLQPMPQTSHHHRH. Positions 86–105 are disordered; it reads APGGPGLQPMPQTSHHHRHR.

This sequence belongs to the insulin family. As to quaternary structure, heterodimer of a B chain and an A chain linked by two disulfide bonds. In terms of tissue distribution, highest expression in the Leydig cells of the testis.

It localises to the secreted. In terms of biological role, seems to play a role in testicular function. May be a trophic hormone with a role in testicular descent in fetal life. Is a ligand for LGR8 receptor. The chain is Insulin-like 3 (INSL3) from Callithrix jacchus (White-tufted-ear marmoset).